The following is a 315-amino-acid chain: Ribosomal RNA small subunit methyltransferase H (315 aa).

Residues 35–37 (AGH), Asp-55, Phe-84, Asp-105, and Gln-112 contribute to the S-adenosyl-L-methionine site.

It belongs to the methyltransferase superfamily. RsmH family.

The protein localises to the cytoplasm. The enzyme catalyses cytidine(1402) in 16S rRNA + S-adenosyl-L-methionine = N(4)-methylcytidine(1402) in 16S rRNA + S-adenosyl-L-homocysteine + H(+). Its function is as follows. Specifically methylates the N4 position of cytidine in position 1402 (C1402) of 16S rRNA. This is Ribosomal RNA small subunit methyltransferase H from Streptococcus agalactiae serotype Ia (strain ATCC 27591 / A909 / CDC SS700).